Reading from the N-terminus, the 500-residue chain is MKMKLTNLLHEFPELKLGSLPSGKNPDSVPIEYIQSDSRKTNPEDIFCVPESIGTKKGEFISNTKASVILLHRSSNISIDSSKIVLECEEDPEQLQGRIASFLLGHPSKTLEIVAVTGTNGKTSLTNILFALAKDQGKICGLIGTIGVKFGDRSIDTGYTTPDASSLNLILKQMKDEGVTTVFMEASSHGLKLGRIGGISLKAGVFTNLTQDHLDFHSDMEDYFESKFRLFEILDVSKSPFAVLDYSSPGGNELHRKIRNNLPDLPIKALDGIGGEYKVSNPFLTLQGTSYVLSLPGNRSQTISTNLLGSFNVRNTALAFLTGLGLGLDPKGMFSSLKEIPQIPGRFQIVYSKDRSRMAVVDYAHTPDALENIIRSVRNSRPKRLITLFGCGGDRDKTKRPKMARIAEELSDQVILTSDNPRSEKPEAILDEIQSGFSPGFTPLLREVDRARAISEGVGILPEGGCLLVAGKGHEEYQIIGKEKRHFSDVEEVRKAFGLF.

UDP-N-acetyl-alpha-D-muramoyl-L-alanyl-D-glutamate is bound at residue serine 38. 118–124 (GTNGKTS) is a binding site for ATP. UDP-N-acetyl-alpha-D-muramoyl-L-alanyl-D-glutamate contacts are provided by residues 160-161 (TT), serine 187, and arginine 195. The residue at position 227 (lysine 227) is an N6-carboxylysine. Residues arginine 395, 419–422 (DNPR), glycine 471, and glutamate 475 contribute to the meso-2,6-diaminopimelate site. The short motif at 419–422 (DNPR) is the Meso-diaminopimelate recognition motif element.

Belongs to the MurCDEF family. MurE subfamily. It depends on Mg(2+) as a cofactor. Carboxylation is probably crucial for Mg(2+) binding and, consequently, for the gamma-phosphate positioning of ATP.

It is found in the cytoplasm. It carries out the reaction UDP-N-acetyl-alpha-D-muramoyl-L-alanyl-D-glutamate + meso-2,6-diaminopimelate + ATP = UDP-N-acetyl-alpha-D-muramoyl-L-alanyl-gamma-D-glutamyl-meso-2,6-diaminopimelate + ADP + phosphate + H(+). Its pathway is cell wall biogenesis; peptidoglycan biosynthesis. Its function is as follows. Catalyzes the addition of meso-diaminopimelic acid to the nucleotide precursor UDP-N-acetylmuramoyl-L-alanyl-D-glutamate (UMAG) in the biosynthesis of bacterial cell-wall peptidoglycan. This chain is UDP-N-acetylmuramoyl-L-alanyl-D-glutamate--2,6-diaminopimelate ligase, found in Leptospira borgpetersenii serovar Hardjo-bovis (strain L550).